The following is a 376-amino-acid chain: Carbamoyl phosphate synthase small chain (376 aa).

A CPSase region spans residues 1 to 183 (MSKAVLVLED…PDGPPGVSRF (183 aa)). S46, G232, and G234 together coordinate L-glutamine. Residues 184 to 376 (TVAALDLGIK…FVELMAGEGR (193 aa)) form the Glutamine amidotransferase type-1 domain. The active-site Nucleophile is C260. L-glutamine contacts are provided by F261, Q264, N302, G304, and F305. Catalysis depends on residues H350 and E352.

This sequence belongs to the CarA family. In terms of assembly, composed of two chains; the small (or glutamine) chain promotes the hydrolysis of glutamine to ammonia, which is used by the large (or ammonia) chain to synthesize carbamoyl phosphate. Tetramer of heterodimers (alpha,beta)4.

The catalysed reaction is hydrogencarbonate + L-glutamine + 2 ATP + H2O = carbamoyl phosphate + L-glutamate + 2 ADP + phosphate + 2 H(+). It carries out the reaction L-glutamine + H2O = L-glutamate + NH4(+). The protein operates within amino-acid biosynthesis; L-arginine biosynthesis; carbamoyl phosphate from bicarbonate: step 1/1. It participates in pyrimidine metabolism; UMP biosynthesis via de novo pathway; (S)-dihydroorotate from bicarbonate: step 1/3. In terms of biological role, small subunit of the glutamine-dependent carbamoyl phosphate synthetase (CPSase). CPSase catalyzes the formation of carbamoyl phosphate from the ammonia moiety of glutamine, carbonate, and phosphate donated by ATP, constituting the first step of 2 biosynthetic pathways, one leading to arginine and/or urea and the other to pyrimidine nucleotides. The small subunit (glutamine amidotransferase) binds and cleaves glutamine to supply the large subunit with the substrate ammonia. The sequence is that of Carbamoyl phosphate synthase small chain from Mycobacterium bovis (strain ATCC BAA-935 / AF2122/97).